A 386-amino-acid chain; its full sequence is MANEVYANNMEISCKAANGKSIAAFPDVCFTPPQAPPTPLGVPIPYPNTGLSKDTTKGTRTIRITRKEVMLKNKSYYKTSYGDEPGRAPKKGIVTSKIKGKVYFTSWSMNVKFESKNVVRHLDLTTHNHASFPGNTPVWPYLDQATVDAGGGPCSNEVKKEKKDCADFKPHGSKDACAGLGAGKPSGKKTSNEADRLADKVAARKCLTARRCALQPYKPNSCCPQQTAHHLIEASALHDKGRGGKGSVPLKGISNYSENKAPCVCAEGVNQNVGTHGLMHTFQSAAAAKSRSGTLQLSNGSSISAKKTTYGTAKRQSMAAMGKVFPQSKCSKECLSAQLDNYHKQCGINARTPIKAVETGQTDVTAATQAIKTRNARLGATRSRVR.

In terms of assembly, interacts with Tsi7.

It carries out the reaction Endonucleolytic cleavage to 5'-phosphodinucleotide and 5'-phosphooligonucleotide end-products.. Its function is as follows. Type VI secretion exported toxin that via to its DNase activity induces growth arrest and ultimately DNA degradation within target cell. The activity is initially neutralized by a cognate immunity protein Tsi7. This is DNase toxin Tse7 from Pseudomonas aeruginosa (strain ATCC 15692 / DSM 22644 / CIP 104116 / JCM 14847 / LMG 12228 / 1C / PRS 101 / PAO1).